Reading from the N-terminus, the 70-residue chain is MEVNTYLNAIILVLVVTIIAVISTSLVRTEPCVIKITGESITVLACKLDAETIKAIADLKPLSVERLSFH.

Topologically, residues 1–4 (MEVN) are lumenal. The chain crosses the membrane as a helical span at residues 5-27 (TYLNAIILVLVVTIIAVISTSLV). Over 28–70 (RTEPCVIKITGESITVLACKLDAETIKAIADLKPLSVERLSFH) the chain is Cytoplasmic.

It belongs to the Tymovirales TGBp3 protein family.

It is found in the host endoplasmic reticulum membrane. In terms of biological role, plays a role in viral cell-to-cell propagation, by facilitating genome transport to neighboring plant cells through plasmosdesmata. May induce the formation of granular vesicles derived from the endoplasmic reticulum, which align on actin filaments. This chain is Movement protein TGBp3, found in Brassica campestris (Field mustard).